The chain runs to 1719 residues: Sodium channel protein type 4 subunit alpha B (1719 aa).

Residues 1-126 lie on the Cytoplasmic side of the membrane; sequence MRTLLPPVGS…IVAIKILIHS (126 aa). Residues 28–50 are disordered; it reads QQIREEERKRTNAQVSEELPEPA. The I repeat unit spans residues 108–431; the sequence is LLSPFNALRI…VVAMAYAEQN (324 aa). Residues 127–145 form a helical membrane-spanning segment; the sequence is LFSLFIMATILTNCAFMTL. Residues 146-152 lie on the Extracellular side of the membrane; that stretch reads SDPPAWS. A helical transmembrane segment spans residues 153-173; it reads KTMEYVFTFIYTFEATIKILS. The Cytoplasmic portion of the chain corresponds to 174–187; sequence RGFCVGKFTFLKDP. A helical membrane pass occupies residues 188–205; the sequence is WNWLDFMVISMAYLTELV. Residues 206 to 211 are Extracellular-facing; it reads DLGNVS. A glycan (N-linked (GlcNAc...) asparagine) is linked at N209. A helical membrane pass occupies residues 212–228; it reads VLRTFRVLRALKTITVI. The Cytoplasmic segment spans residues 229–247; the sequence is PGLKTIVGALIQSVRKLAD. Residues 248 to 267 traverse the membrane as a helical segment; the sequence is AMVLTVFCLSVFALIGLQLF. The Extracellular segment spans residues 268–368; the sequence is MGNLRQKCVL…PNYGYTSYDS (101 aa). C275 and C337 are joined by a disulfide. 2 N-linked (GlcNAc...) asparagine glycosylation sites follow: N285 and N339. The cysteines at positions 346 and 352 are disulfide-linked. The segment at residues 369-393 is an intramembrane region (pore-forming); that stretch reads FGWAFLALFRLMTQDFWENLFQLTL. Over 394 to 400 the chain is Extracellular; it reads RTAGKTY. A helical membrane pass occupies residues 401–421; the sequence is MIFFVVVIFLGSFYLINLILA. Residues 422–513 lie on the Cytoplasmic side of the membrane; it reads VVAMAYAEQN…ECLYAIVMDP (92 aa). Residues 495–766 form an II repeat; the sequence is CCGCWRHLKE…QIAINRINRA (272 aa). Residues 514 to 532 traverse the membrane as a helical segment; the sequence is FVDLGITICIILNTVFMAM. The Extracellular portion of the chain corresponds to 533-543; that stretch reads EHYPMSADFEE. The helical transmembrane segment at 544-563 threads the bilayer; sequence LLSVGNLVFTGIFTGEMVFK. Over 564–577 the chain is Cytoplasmic; sequence ILAMDPYFYFQVGW. A helical membrane pass occupies residues 578 to 597; it reads NIFDSIIVTISLVELGLANV. At 598-599 the chain is on the extracellular side; it reads QG. The chain crosses the membrane as a helical span at residues 600–617; the sequence is LSVLRSFRLMRVFKLAKS. Over 618–633 the chain is Cytoplasmic; sequence WPTLNMLIKIIGNSVG. The helical transmembrane segment at 634-652 threads the bilayer; sequence ALGNLTLVLAIIVFIFAVV. The Extracellular portion of the chain corresponds to 653–681; sequence GMQLFGKNYKDCVCRISEDCVLPRWHMND. A disulfide bridge connects residues C666 and C672. Positions 682 to 702 form an intramembrane region, pore-forming; the sequence is FFHAFLIIFRVLCGEWIESMW. Residues 703 to 713 lie on the Extracellular side of the membrane; the sequence is DCMEVSGQTMC. A disulfide bridge links C704 with C713. A helical transmembrane segment spans residues 714 to 732; the sequence is LIVFMMVLVIGNLVVLNLF. The Cytoplasmic segment spans residues 733–919; it reads LALLLSSFSG…TCFSIVENNY (187 aa). The span at 834–845 shows a compositional bias: acidic residues; the sequence is SDSDDSDYDEDK. A disordered region spans residues 834-862; the sequence is SDSDDSDYDEDKDSQCDESSVCSSVQKPE. An III repeat occupies 900 to 1215; that stretch reads RGKIWCNIRR…KKYYNAMKKL (316 aa). The helical transmembrane segment at 920-937 threads the bilayer; it reads FESFIVFMILLSSGALAF. The Extracellular segment spans residues 938–950; that stretch reads EDIYLEKHQLIKS. Residues 951-969 form a helical membrane-spanning segment; it reads ILEYADKVFTYVFVMEMVL. At 970 to 983 the chain is on the cytoplasmic side; it reads KWFAYGFKSYFSNA. A helical membrane pass occupies residues 984 to 1002; that stretch reads WCWLDFLIVDVSLVSLTAN. Topologically, residues 1003–1010 are extracellular; sequence ILGYSELG. The helical transmembrane segment at 1011 to 1029 threads the bilayer; it reads AIKSLRTLRALRPLRALSR. Residues 1030 to 1046 are Cytoplasmic-facing; that stretch reads FEGMRVVVNALVGAVPS. Residues 1047 to 1066 form a helical membrane-spanning segment; the sequence is IFNVLLVCLIFWLIFSIMGV. Over 1067–1119 the chain is Extracellular; that stretch reads NLFAGKFSYCFNETSQEIIDTKVVDNKTECIALIKANFTEVRWKNVKVNYDNV. C1076 and C1096 form a disulfide bridge. N-linked (GlcNAc...) asparagine glycosylation is found at N1078 and N1092. Positions 1120 to 1141 form an intramembrane region, pore-forming; the sequence is GIGYLSLLQVATFKGWTDIMYA. Residues 1142 to 1158 are Extracellular-facing; that stretch reads AVDSRDVESQPIYEVNL. A helical membrane pass occupies residues 1159-1180; sequence YMYLYFVIFIIFGSFFTLNLFI. At 1181–1243 the chain is on the cytoplasmic side; the sequence is GVIIDNFNQQ…LVFDLVTKQI (63 aa). The interval 1199–1201 is important for rapid channel inactivation; it reads IFM. Residues 1224-1521 form an IV repeat; sequence VPRPENPFQG…WEKFDPDASQ (298 aa). The helical transmembrane segment at 1244-1261 threads the bilayer; sequence FDVFIMVLICLNMVTMMV. At 1262–1272 the chain is on the extracellular side; it reads ETDEQSDKKEE. Residues 1273–1291 traverse the membrane as a helical segment; it reads VLYWINVVFILIFTTECTL. The Cytoplasmic segment spans residues 1292 to 1303; sequence KIIALRRHYFSI. A helical transmembrane segment spans residues 1304–1321; sequence GWNIFDFVVVILSILGLL. Residues 1322 to 1334 lie on the Extracellular side of the membrane; sequence LADIIEKYFVSPT. A helical transmembrane segment spans residues 1335–1351; it reads LFRVIRLARIGRVLRLI. The Cytoplasmic segment spans residues 1352–1370; it reads RGAKGIRTLLFALMMSLPA. A helical transmembrane segment spans residues 1371-1388; sequence LFNIGLLLFLIMFIFSIF. Residues 1389 to 1410 lie on the Extracellular side of the membrane; sequence GMSNFAYVKKEALIDDMFNFET. The segment at residues 1411 to 1433 is an intramembrane region (pore-forming); that stretch reads FGNSMICLFMITTSAGWDGLLSP. The Extracellular segment spans residues 1434–1462; it reads IMNTPPDCDPNVENPGTTVRGNCGSPAIG. C1441 and C1456 form a disulfide bridge. A helical membrane pass occupies residues 1463-1485; the sequence is IAFFSTYIIMSFLVVVNMFIAII. At 1486–1719 the chain is on the cytoplasmic side; sequence LENFNVATEE…QERDQRETSV (234 aa). Residues 1615–1644 enclose the IQ domain; sequence EEVAATVIQRAYRKYLLLRTVRLASFMYRE.

It belongs to the sodium channel (TC 1.A.1.10) family. Nav1.4/SCN4A subfamily. In terms of assembly, voltage-gated sodium (Nav) channels consist of an ion-conducting alpha subunit which is functional on its own associated with regulatory beta subunits.

The protein resides in the cell membrane. The catalysed reaction is Na(+)(in) = Na(+)(out). Its function is as follows. Pore-forming subunit of a voltage-gated sodium (Nav) channel that directly mediates the depolarizing phase of action potentials in excitable membranes. Navs, also called VGSCs (voltage-gated sodium channels) or VDSCs (voltage-dependent sodium channels), operate by switching between closed and open conformations depending on the voltage difference across the membrane. In the open conformation they allow Na(+) ions to selectively pass through the pore, along their electrochemical gradient. The influx of Na+ ions provokes membrane depolarization, initiating the propagation of electrical signals throughout cells and tissues. This is Sodium channel protein type 4 subunit alpha B (scn4ab) from Takifugu rubripes (Japanese pufferfish).